Here is a 439-residue protein sequence, read N- to C-terminus: Na(+)/H(+) antiporter NhaA (439 aa).

Transmembrane regions (helical) follow at residues 12–32 (SMNI…AIIA), 67–87 (MIEF…GLEI), 103–123 (ALPF…YMSI), 133–153 (GLAI…SLLG), 162–182 (IFLT…IALF), 186–206 (HVSY…YFIG), 214–234 (IFFL…GIHS), 314–334 (ILPL…GELV), 341–361 (VAAG…WLAI), 379–399 (GIAL…NLSF), and 412–432 (FGVL…LRIV).

It belongs to the NhaA Na(+)/H(+) (TC 2.A.33) antiporter family.

It localises to the cell inner membrane. The catalysed reaction is Na(+)(in) + 2 H(+)(out) = Na(+)(out) + 2 H(+)(in). In terms of biological role, na(+)/H(+) antiporter that extrudes sodium in exchange for external protons. This Bacteroides thetaiotaomicron (strain ATCC 29148 / DSM 2079 / JCM 5827 / CCUG 10774 / NCTC 10582 / VPI-5482 / E50) protein is Na(+)/H(+) antiporter NhaA.